Reading from the N-terminus, the 408-residue chain is Substance-P receptor (408 aa).

The Extracellular segment spans residues 1–32 (MNSNISAQNDSALNSTIQNGTKINQFIQPPWQ). Asn-4, Asn-9, Asn-14, and Asn-19 each carry an N-linked (GlcNAc...) asparagine glycan. A helical membrane pass occupies residues 33 to 55 (IALWSVAYSIIVIVSLVGNIIVM). At 56–65 (WIIIAHKRMR) the chain is on the cytoplasmic side. Residues 66–87 (TVTNYFLVNLAFAEASMSAFNT) traverse the membrane as a helical segment. The Extracellular portion of the chain corresponds to 88–107 (VINFTYAIHNHWYYGLIYCK). Residues Cys-106 and Cys-181 are joined by a disulfide bond. Residues 108 to 129 (FHNFFPISAVFTSIYSMTAIAL) traverse the membrane as a helical segment. Residues 130 to 149 (DRYMAIIHPLKPRLSATATK) are Cytoplasmic-facing. A helical membrane pass occupies residues 150 to 170 (IVICVIWSFSFCMAFPLGYYA). At 171–196 (DVYPMEGGDICYLNWPDSEENRKYEQ) the chain is on the extracellular side. A helical membrane pass occupies residues 197–221 (VYQVLVFCLIYILPLLVIGCAYTFI). At 222–250 (GMTLWASEIPGDSSDRYHEQVVAKRKVVK) the chain is on the cytoplasmic side. Residues 251–272 (MMIVVVCTFAICWLPFHIFFLL) traverse the membrane as a helical segment. The Extracellular segment spans residues 273–283 (QTLHEMTQKFY). The helical transmembrane segment at 284-308 (QQFYLAIMWLAMSSTMYNPIIYCCL) threads the bilayer. Topologically, residues 309–408 (NDRFRIGFKH…SSSFYSNNLA (100 aa)) are cytoplasmic. Residue Cys-323 is the site of S-palmitoyl cysteine attachment. The disordered stretch occupies residues 366–408 (DEEAEENGKSSKRLSLDLTSNGSSRSVCKTMSDSSSFYSNNLA). Over residues 382–408 (DLTSNGSSRSVCKTMSDSSSFYSNNLA) the composition is skewed to polar residues.

It belongs to the G-protein coupled receptor 1 family.

It is found in the cell membrane. This is a receptor for the tachykinin neuropeptide substance P. It is probably associated with G proteins that activate a phosphatidylinositol-calcium second messenger system. In Aquarana catesbeiana (American bullfrog), this protein is Substance-P receptor (TACR1).